The chain runs to 448 residues: Fibulin-5 (448 aa).

The N-terminal stretch at 1-23 is a signal peptide; the sequence is MPGIKRILTVTILALCLPSPGNA. The region spanning 42–82 is the EGF-like 1; calcium-binding domain; it reads DIDECRTIPEACRGDMMCVNQNGRYLCIPRTNPVYRGPYSN. Cystine bridges form between C46–C59, C53–C68, C131–C144, C138–C153, C155–C166, C172–C181, C177–C190, C192–C205, C211–C221, C217–C230, C232–C245, C251–C262, C258–C271, C273–C286, C292–C305, C299–C314, and C320–C332. A Cell attachment site motif is present at residues 54-56; that stretch reads RGD. The 41-residue stretch at 127–167 folds into the EGF-like 2; calcium-binding domain; that stretch reads DVDECATDSHQCNPTQICINTEGGYTCSCTDGYWLLEGQCL. The 39-residue stretch at 168-206 folds into the EGF-like 3; calcium-binding domain; the sequence is DIDECRYGYCQQLCANVPGSYSCTCNPGFTLNEDGRSCQ. Residues 207–246 enclose the EGF-like 4; calcium-binding domain; the sequence is DVNECATENPCVQTCVNTYGSFICRCDPGYELEEDGVHCS. The segment at 245 to 448 is interaction with LOXL1; sequence CSDMDECSFS…LRIYVSQYPF (204 aa). An EGF-like 5; calcium-binding domain is found at 247–287; that stretch reads DMDECSFSEFLCQHECVNQPGTYFCSCPPGYILLDDNRSCQ. Residues N283 and N296 are each glycosylated (N-linked (GlcNAc...) asparagine). Residues 288-333 form the EGF-like 6; calcium-binding domain; sequence DINECEHRNHTCNLQQTCYNLQGGFKCIDPIRCEEPYLRISDNRCM.

Belongs to the fibulin family. As to quaternary structure, homodimer. Monomer, homodimerizes in presence of Ca(2+). Interacts with ELN. Interacts (via N-terminus) with the integrins ITGAV/ITGB3, ITGAV/ITGB5 and ITGA9/ITGB1. Interacts with FBN1 (via N-terminal domain). Forms a ternary complex with ELN and FBN1. Interacts with EFEMP2 with moderate affinity. Interacts with LOXL1. In terms of processing, N-glycosylated.

It localises to the secreted. The protein resides in the extracellular space. Its subcellular location is the extracellular matrix. Functionally, essential for elastic fiber formation, is involved in the assembly of continuous elastin (ELN) polymer and promotes the interaction of microfibrils and ELN. Stabilizes and organizes elastic fibers in the skin, lung and vasculature. Promotes adhesion of endothelial cells through interaction of integrins and the RGD motif. Vascular ligand for integrin receptors which may play a role in vascular development and remodeling. May act as an adapter that mediates the interaction between FBN1 and ELN. This Pongo abelii (Sumatran orangutan) protein is Fibulin-5 (FBLN5).